We begin with the raw amino-acid sequence, 258 residues long: Snake venom serine proteinase 5 (258 aa).

Positions 1–18 are cleaved as a signal peptide; that stretch reads MVLIRVLANLLILQLSYA. Positions 19–24 are excised as a propeptide; sequence QKSSEL. The 225-residue stretch at 25-249 folds into the Peptidase S1 domain; it reads VVGGDECNIN…YNDWIQSIIA (225 aa). Cystine bridges form between Cys31-Cys163, Cys50-Cys66, Cys98-Cys256, Cys142-Cys210, Cys174-Cys189, and Cys200-Cys225. Asn44 carries N-linked (GlcNAc...) asparagine glycosylation. Active-site charge relay system residues include His65 and Asp110. Ser204 serves as the catalytic Charge relay system.

The protein belongs to the peptidase S1 family. Snake venom subfamily. As to quaternary structure, monomer. In terms of tissue distribution, expressed by the venom gland.

It is found in the secreted. Snake venom serine protease that may act in the hemostasis system of the prey. The chain is Snake venom serine proteinase 5 from Crotalus adamanteus (Eastern diamondback rattlesnake).